A 101-amino-acid polypeptide reads, in one-letter code: NAD(P)H-quinone oxidoreductase subunit 4L, chloroplastic (101 aa).

A run of 3 helical transmembrane segments spans residues 2–22, 32–52, and 61–81; these read YIEN…YGLL, MCLE…SNFI, and VIAI…LALV.

It belongs to the complex I subunit 4L family. NDH is composed of at least 16 different subunits, 5 of which are encoded in the nucleus.

It is found in the plastid. The protein resides in the chloroplast thylakoid membrane. The enzyme catalyses a plastoquinone + NADH + (n+1) H(+)(in) = a plastoquinol + NAD(+) + n H(+)(out). The catalysed reaction is a plastoquinone + NADPH + (n+1) H(+)(in) = a plastoquinol + NADP(+) + n H(+)(out). Functionally, NDH shuttles electrons from NAD(P)H:plastoquinone, via FMN and iron-sulfur (Fe-S) centers, to quinones in the photosynthetic chain and possibly in a chloroplast respiratory chain. The immediate electron acceptor for the enzyme in this species is believed to be plastoquinone. Couples the redox reaction to proton translocation, and thus conserves the redox energy in a proton gradient. The polypeptide is NAD(P)H-quinone oxidoreductase subunit 4L, chloroplastic (Mesostigma viride (Green alga)).